The chain runs to 956 residues: MEVTCLLLLALIPFHCRGQGVYAPAQAQIVHAGQACVVKEDNISERVYTIRESDTLVLQCLVTGHPRPQVRWTKTAGSASDKFQETSVFNETLRIERIARTQGGRYYCKAENGVGVPAIKSIRVDVQYLDEPVLTVHQTVSDVRGNFYQEKTVFLRCTVSSNPPARFIWKRGSDTLSHSQDNGVDIYEPLYTQGETKVLKLKNLRPQDYASYTCQVSVRNVCGIPDKAITFQLTNTTAPPALKLSVNETLVVNPGENVTVQCLLTGGDPLPQLHWSHGPGPLPLGALAQGGTLSIPSVQARDSGYYNCTATNNVGNPAKKTVNLLVRSLKNATFQITPDMIKESENIQLGQDLKLSCHVDAVPQEKVNYQWFKNGKPARTSKRLLVTRNDPELPAVTSSLELIDLHFSDYGTYLCMASFPGSPVPDLSIEVNISSETVPPTISVPKGRAVVTVREGSPAELQCEVRGKPRPPVLWSRVDKEAALLPSGLALEETPDGKLRLESVSRDMSGTYRCQTARYNGFNVRPREAQVQLTVHFPPEVEPSSQDVRQALGRPVLLRCSLLRGSPQRIASAVWRFKGQLLPPPPVLPAAAVETPDHAELRLDALTRDSSGNYECSVSNDVGSATCLFQVSAKAYSPEFYFDTPNPTRSHKLSKNYSYVLQWTQREPDAVDPVLNYRLSIRQLNQHNAMVKAIPVRRVEKGQLLEYILTDLRVPHSYEIRLTPYTTFGAGDMASRIIHYTEPINLPSLSDNTCHFEDEKICGYTQDLTDNFDWTRQNALTQNPKRSPNTGPPTDISGTPEGYYMFIETSRPRELGDRARLVSPLYNASAKFYCVSFFYHMYGKHIGSLNLLVRSRNKGTLDTHAWSLSGNKGNVWQQAHVPINPSGPFQIIFEGVRGSGYLGDIAIDDVTLKKGECPRRQMDPNKVVVMPGSGAPRLSSLQLWGSMAIFLLALQR.

A signal peptide spans 1–18 (MEVTCLLLLALIPFHCRG). Ig-like domains follow at residues 24–123 (PAQA…KSIR) and 132–230 (PVLT…KAIT). A glycan (N-linked (GlcNAc...) asparagine) is linked at Asn-42. 2 cysteine pairs are disulfide-bonded: Cys-60/Cys-108 and Cys-157/Cys-214. N-linked (GlcNAc...) asparagine glycans are attached at residues Asn-235, Asn-247, Asn-257, and Asn-307. 4 Ig-like domains span residues 240 to 323 (PALK…KTVN), 338 to 432 (PDMI…IEVN), 440 to 532 (PTIS…AQVQ), and 539 to 650 (PEVE…PTRS). Intrachain disulfides connect Cys-262–Cys-308 and Cys-357–Cys-415. Asn-432 carries N-linked (GlcNAc...) asparagine glycosylation. Intrachain disulfides connect Cys-463/Cys-514 and Cys-560/Cys-616. One can recognise a Fibronectin type-III domain in the interval 627–744 (CLFQVSAKAY…SRIIHYTEPI (118 aa)). The 168-residue stretch at 752 to 919 (NTCHFEDEKI…VTLKKGECPR (168 aa)) folds into the MAM domain. Polar residues predominate over residues 780–789 (LTQNPKRSPN). Residues 780 to 799 (LTQNPKRSPNTGPPTDISGT) form a disordered region. Residue Ser-933 is the site of GPI-anchor amidated serine attachment. The propeptide at 934–956 (GAPRLSSLQLWGSMAIFLLALQR) is removed in mature form.

Interacts heterophilically through its MAM domain with proteins in axon-rich regions and through its Ig-like domains with proteins in differentiating muscle. Interacts (through the Ig-like domains) with NLGN2. As to expression, expressed by neurons in layers 2 and 3 of the cortex during their migration and settling in the cortical plate. Also found in layers 4 and 6a. From 9.5 dpc-13.5 dpc, detected in the marginal zone of the developing cortex. At 16.5 dpc, modest expression is found in the intermediate zone. At postnatal day 1, evident in the superficial cortical plate. By postnatal day 7, expression is limited to layers 2 and 3 throughout most of the cortex.

It is found in the cell membrane. Required for radial migration of cortical neurons in the superficial layer of the neocortex. Plays a role in the formation or maintenance of inhibitory synapses. May function by inhibiting the activity of NLGN2. In Mus musculus (Mouse), this protein is MAM domain-containing glycosylphosphatidylinositol anchor protein 1.